The sequence spans 90 residues: MVKNSFSSVISQEEKKENGGSVEFQVVSFTNKIRRLTSHLELHKKDYLSQRGLRKILGKRQRLLSYLSKKNKMRYKELINQLDIRESKTQ.

Over residues 1–11 (MVKNSFSSVIS) the composition is skewed to polar residues. The segment at 1–20 (MVKNSFSSVISQEEKKENGG) is disordered.

The protein belongs to the universal ribosomal protein uS15 family. In terms of assembly, part of the 30S ribosomal subunit.

The protein resides in the plastid. Its subcellular location is the chloroplast. This Cucumis sativus (Cucumber) protein is Small ribosomal subunit protein uS15c (rps15).